A 267-amino-acid polypeptide reads, in one-letter code: Diphthine--ammonia ligase (267 aa).

Phosphotyrosine is present on Tyr-97.

This sequence belongs to the Diphthine--ammonia ligase family.

It carries out the reaction diphthine-[translation elongation factor 2] + NH4(+) + ATP = diphthamide-[translation elongation factor 2] + AMP + diphosphate + H(+). It functions in the pathway protein modification; peptidyl-diphthamide biosynthesis. Functionally, amidase that catalyzes the last step of diphthamide biosynthesis using ammonium and ATP. Diphthamide biosynthesis consists in the conversion of an L-histidine residue in the translation elongation factor 2 (EEF2) to diphthamide. The chain is Diphthine--ammonia ligase (Dph6) from Mus musculus (Mouse).